The sequence spans 451 residues: Secreted RxLR effector protein 111 (451 aa).

The first 19 residues, 1–19 (MRGTLATALLLVASCRIAA), serve as a signal peptide directing secretion. Positions 48–69 (RFLRDNREQRVALALTAANESR) match the RxLR-dEER motif. Asn66 carries an N-linked (GlcNAc...) asparagine glycan. Composition is skewed to polar residues over residues 175-184 (RKTLSKTQFK) and 413-426 (SPASQSRSNNQRTG). Disordered regions lie at residues 175-194 (RKTLSKTQFKNPAASKSTKR) and 404-451 (IPLQ…NKHA). Over residues 437–451 (PERDSFRHIESNKHA) the composition is skewed to basic and acidic residues.

Belongs to the RxLR effector family.

Its subcellular location is the secreted. It is found in the host nucleus. Functionally, secreted effector that acts as an elicitor that induces cell death in host plant cells. The sequence is that of Secreted RxLR effector protein 111 from Plasmopara viticola (Downy mildew of grapevine).